Reading from the N-terminus, the 92-residue chain is Transcription factor ILI6 (92 aa).

A disordered region spans residues 1–20; it reads MSSRRSRSRQSGSSRITDEQ. The bHLH domain maps to 5 to 59; sequence RSRSRQSGSSRITDEQISDLVSKLQDLLPEARLRSNDRVPSSRVLQETCNYIRSL.

It belongs to the bHLH protein family. As to quaternary structure, interacts with APG.

It localises to the nucleus. Its function is as follows. Atypical and probable non DNA-binding bHLH transcription factor that acts as a positive regulator of grain size. Binds the transcription repressor APG and forms a heterodimer of antagonistic bHLH transcription factors that regulates grain length and weight by controlling cell elongation in lemma and palea. May be involved in the control of lamina inclination through brassinosteroid signaling pathway. The sequence is that of Transcription factor ILI6 (ILI6) from Oryza sativa subsp. indica (Rice).